The sequence spans 311 residues: Tyrosine recombinase XerD (311 aa).

The Core-binding (CB) domain occupies 3 to 88; it reads DMSAAYVEAF…ALRQFYKFLY (86 aa). The Tyr recombinase domain maps to 109–298; sequence TLPKTLSIED…LEERLHDLVQ (190 aa). Active-site residues include Arg156, Lys180, His250, Arg253, and His276. Tyr285 acts as the O-(3'-phospho-DNA)-tyrosine intermediate in catalysis.

It belongs to the 'phage' integrase family. XerD subfamily. In terms of assembly, forms a cyclic heterotetrameric complex composed of two molecules of XerC and two molecules of XerD.

It localises to the cytoplasm. Site-specific tyrosine recombinase, which acts by catalyzing the cutting and rejoining of the recombining DNA molecules. The XerC-XerD complex is essential to convert dimers of the bacterial chromosome into monomers to permit their segregation at cell division. It also contributes to the segregational stability of plasmids. The sequence is that of Tyrosine recombinase XerD from Rhizobium meliloti (strain 1021) (Ensifer meliloti).